Reading from the N-terminus, the 76-residue chain is Contulakin-G (76 aa).

A signal peptide spans 1–22 (MQTAYWVMVMMMVWIAAPLSEG). Positions 23-50 (GKLNDVIRGLVPDDITPQLILGSLISRR) are excised as a propeptide. Residue Gln51 is modified to Pyrrolidone carboxylic acid. The segment at 51-76 (QSEEGGSNATKKPYILRASDQVASGP) is disordered. Thr60 carries an O-linked (GalNAc...) threonine glycan. A propeptide spanning residues 67–76 (RASDQVASGP) is cleaved from the precursor.

It belongs to the conotoxin C superfamily. O-glycosylated. The glycosylation seems to enhance the affinity to the neurotensin receptors. Expressed by the venom duct.

The protein localises to the secreted. Its function is as follows. Acts as an agonist of neurotensin receptors. It binds to human neurotensin type 1 receptor (NTSR1), rat neurotensin types 1 and 2 receptors (NTSR1/NTSR2) and mouse neurotensin type 3 receptor (SORT1). In Conus geographus (Geography cone), this protein is Contulakin-G.